The primary structure comprises 333 residues: Type II restriction enzyme XcyI (333 aa).

Belongs to the XcyI type II restriction endonuclease family. As to quaternary structure, monomer. The cofactor is Mg(2+).

It catalyses the reaction Endonucleolytic cleavage of DNA to give specific double-stranded fragments with terminal 5'-phosphates.. Its function is as follows. A P subtype restriction enzyme that recognizes the double-stranded sequence 5'-CCCGGG-3' and cleaves after C-1. In Xanthomonas campestris pv. cyanopsidis, this protein is Type II restriction enzyme XcyI (xcyIR).